Here is a 335-residue protein sequence, read N- to C-terminus: Pyridoxal 5'-phosphate synthase subunit PdxS (335 aa).

Residue D30 participates in D-ribose 5-phosphate binding. K87 acts as the Schiff-base intermediate with D-ribose 5-phosphate in catalysis. G159 provides a ligand contact to D-ribose 5-phosphate. R171 lines the D-glyceraldehyde 3-phosphate pocket. Residues G257 and 278 to 279 (GS) contribute to the D-ribose 5-phosphate site.

The protein belongs to the PdxS/SNZ family. In the presence of PdxT, forms a dodecamer of heterodimers.

The catalysed reaction is aldehydo-D-ribose 5-phosphate + D-glyceraldehyde 3-phosphate + L-glutamine = pyridoxal 5'-phosphate + L-glutamate + phosphate + 3 H2O + H(+). Its pathway is cofactor biosynthesis; pyridoxal 5'-phosphate biosynthesis. Its function is as follows. Catalyzes the formation of pyridoxal 5'-phosphate from ribose 5-phosphate (RBP), glyceraldehyde 3-phosphate (G3P) and ammonia. The ammonia is provided by the PdxT subunit. Can also use ribulose 5-phosphate and dihydroxyacetone phosphate as substrates, resulting from enzyme-catalyzed isomerization of RBP and G3P, respectively. This Thermococcus kodakarensis (strain ATCC BAA-918 / JCM 12380 / KOD1) (Pyrococcus kodakaraensis (strain KOD1)) protein is Pyridoxal 5'-phosphate synthase subunit PdxS.